A 505-amino-acid polypeptide reads, in one-letter code: Pleckstrin homology domain-containing family D member 1 (505 aa).

A PH domain is found at 28 to 136; the sequence is KVQLYGVLWK…WLEMLQESGK (109 aa). Positions 146-391 form a coiled coil; the sequence is EAMIKSLEAQ…KVRNKEKEER (246 aa). The tract at residues 264-284 is disordered; it reads DKNQPQPLTNQSEQPPATDGL. Over residues 267 to 278 the composition is skewed to polar residues; that stretch reads QPQPLTNQSEQP. An Omega-N-methylarginine modification is found at R502.

It belongs to the PLEKHD1 family.

The polypeptide is Pleckstrin homology domain-containing family D member 1 (Plekhd1) (Rattus norvegicus (Rat)).